Reading from the N-terminus, the 535-residue chain is Cytochrome P450 monooxygenase BOA7 (535 aa).

Residues 20 to 37 (SIFLILGFFVLAAILIAW) form a helical membrane-spanning segment. 4 N-linked (GlcNAc...) asparagine glycosylation sites follow: Asn65, Asn148, Asn180, and Asn420. Cys478 serves as a coordination point for heme.

It belongs to the cytochrome P450 family. Heme is required as a cofactor.

The protein localises to the membrane. Its pathway is polyketide biosynthesis. Its function is as follows. Cytochrome P450 monooxygenase; part of the gene cluster B that mediates the biosynthesis of botcinic acid and its botcinin derivatives, acetate-derived polyketides that contribute to virulence when combined with the sesquiterpene botrydial. Botcinic acid and its derivatives have been shown to induce chlorosis and necrosis during host plant infection, but also have antifungal activities. Two polyketide synthases, BOA6 and BOA9, are involved in the biosynthesis of botcinins. BOA6 mediates the formation of the per-methylated tetraketide core by condensation of four units of malonyl-CoA with one unit of acetyl-CoA, which would be methylated in activated methylene groups to yield a bicyclic acid intermediate that could then either be converted to botrylactone derivatives or lose the starter acetate unit through a retro-Claisen type C-C bond cleavage to yield botcinin derivatives. The second polyketide synthase, BOA9, is probably required for the biosynthesis of the tetraketide side chain of botcinins. The methyltransferase (MT) domain within BOA6 is probably responsible for the incorporation of four methyl groups. The trans-enoyl reductase BOA5 might take over the enoyl reductase function of BOA6 that misses an ER domain. The monooxygenases BOA2, BOA3 and BOA4 might be involved in further hydroxylations at C4, C5 and C8, whereas BOA7, close to BOA9, could potentially be involved in the hydroxylation at C4 in the side chain of botcinins. This is Cytochrome P450 monooxygenase BOA7 from Botryotinia fuckeliana (strain B05.10) (Noble rot fungus).